We begin with the raw amino-acid sequence, 319 residues long: Acetyl-coenzyme A carboxylase carboxyl transferase subunit alpha (319 aa).

The CoA carboxyltransferase C-terminal domain occupies 35–296 (NIDEEVHRLR…KAQLLADLAD (262 aa)).

Belongs to the AccA family. In terms of assembly, acetyl-CoA carboxylase is a heterohexamer composed of biotin carboxyl carrier protein (AccB), biotin carboxylase (AccC) and two subunits each of ACCase subunit alpha (AccA) and ACCase subunit beta (AccD).

It localises to the cytoplasm. It carries out the reaction N(6)-carboxybiotinyl-L-lysyl-[protein] + acetyl-CoA = N(6)-biotinyl-L-lysyl-[protein] + malonyl-CoA. It functions in the pathway lipid metabolism; malonyl-CoA biosynthesis; malonyl-CoA from acetyl-CoA: step 1/1. In terms of biological role, component of the acetyl coenzyme A carboxylase (ACC) complex. First, biotin carboxylase catalyzes the carboxylation of biotin on its carrier protein (BCCP) and then the CO(2) group is transferred by the carboxyltransferase to acetyl-CoA to form malonyl-CoA. The polypeptide is Acetyl-coenzyme A carboxylase carboxyl transferase subunit alpha (Klebsiella pneumoniae subsp. pneumoniae (strain ATCC 700721 / MGH 78578)).